Consider the following 138-residue polypeptide: Large ribosomal subunit protein uL16 (138 aa).

The segment covering 1 to 19 (MLIPRRVKHRKQHHPKRSG) has biased composition (basic residues). Positions 1–24 (MLIPRRVKHRKQHHPKRSGAAKGG) are disordered.

The protein belongs to the universal ribosomal protein uL16 family. In terms of assembly, part of the 50S ribosomal subunit.

Its function is as follows. Binds 23S rRNA and is also seen to make contacts with the A and possibly P site tRNAs. The protein is Large ribosomal subunit protein uL16 of Micrococcus luteus (strain ATCC 4698 / DSM 20030 / JCM 1464 / CCM 169 / CCUG 5858 / IAM 1056 / NBRC 3333 / NCIMB 9278 / NCTC 2665 / VKM Ac-2230) (Micrococcus lysodeikticus).